Reading from the N-terminus, the 530-residue chain is Glutamate--cysteine ligase (530 aa).

Belongs to the glutamate--cysteine ligase type 1 family. Type 1 subfamily.

The enzyme catalyses L-cysteine + L-glutamate + ATP = gamma-L-glutamyl-L-cysteine + ADP + phosphate + H(+). The protein operates within sulfur metabolism; glutathione biosynthesis; glutathione from L-cysteine and L-glutamate: step 1/2. The sequence is that of Glutamate--cysteine ligase from Azotobacter vinelandii (strain DJ / ATCC BAA-1303).